Consider the following 847-residue polypeptide: Lethal(3)malignant brain tumor-like protein 1 (847 aa).

Composition is skewed to basic and acidic residues over residues 65–82 and 144–155; these read FPREPPRNTGAERPEKGV and AVKEGHAKKDGD. Disordered stretches follow at residues 65–87, 142–163, and 237–296; these read FPREPPRNTGAERPEKGVGSEPI, AEAVKEGHAKKDGDSDVAPTSR, and VKKR…SEEK. 3 MBT repeats span residues 300 to 400, 408 to 507, and 516 to 611; these read WSWA…LQPP, FSWT…LTPP, and FIWE…LQPP. The segment at 473–480 is interaction with monomethylated and dimethylated peptides; the sequence is FDNWDDTY. The CCHHC-type zinc finger occupies 639 to 682; sequence SKYSFHHRKCPTPGCDGSGHVTGRFTAHYCLSGCPLAEKNQGKL. Cys648, Cys653, His666, and Cys672 together coordinate Zn(2+). The SAM domain occupies 778 to 842; that stretch reads WTIDEVFSFV…YNAILMFKNA (65 aa).

As to quaternary structure, homodimer.

It localises to the nucleus. Its function is as follows. Polycomb group (PcG) protein that specifically recognizes and binds mono- and dimethyllysine residues on target proteins, thereby acting as a 'reader' of a network of post-translational modifications. PcG proteins maintain the transcriptionally repressive state of genes: acts as a chromatin compaction factor by recognizing and binding mono- and dimethylated histone H1b/H1-4 at 'Lys-26' (H1bK26me1 and H1bK26me2) and histone H4 at 'Lys-20' (H4K20me1 and H4K20me2), leading to condense chromatin and repress transcription. The polypeptide is Lethal(3)malignant brain tumor-like protein 1 (L3MBTL1) (Gallus gallus (Chicken)).